The sequence spans 57 residues: Potassium channel toxin MeuTXKalpha2 (57 aa).

An N-terminal signal peptide occupies residues 1-19 (MSRLYAIILIALVFNVIMT). Positions 20-28 (IMPDMKVEA) are excised as a propeptide. 3 disulfides stabilise this stretch: Cys31–Cys47, Cys34–Cys52, and Cys38–Cys54.

The protein belongs to the short scorpion toxin superfamily. Potassium channel inhibitor family. Alpha-KTx 08 subfamily. In terms of tissue distribution, expressed by the venom gland.

It is found in the secreted. In terms of biological role, inhibits Kv1.1/KCNA1, Kv1.3/KCNA3 and Shaker potassium channels. The protein is Potassium channel toxin MeuTXKalpha2 of Mesobuthus eupeus (Lesser Asian scorpion).